The chain runs to 202 residues: Phosphoenolpyruvate guanylyltransferase (202 aa).

Phosphoenolpyruvate contacts are provided by T140, G156, and S159.

The protein belongs to the CofC family.

The catalysed reaction is phosphoenolpyruvate + GTP + H(+) = enolpyruvoyl-2-diphospho-5'-guanosine + diphosphate. The protein operates within cofactor biosynthesis; coenzyme F420 biosynthesis. Guanylyltransferase that catalyzes the activation of phosphoenolpyruvate (PEP) as enolpyruvoyl-2-diphospho-5'-guanosine, via the condensation of PEP with GTP. It is involved in the biosynthesis of coenzyme F420, a hydride carrier cofactor. The protein is Phosphoenolpyruvate guanylyltransferase of Chloroflexus aggregans (strain MD-66 / DSM 9485).